A 67-amino-acid polypeptide reads, in one-letter code: Beta-defensin 14 (67 aa).

Positions 1 to 22 (MRLHYLLFVFLILFLVPAPGDA) are cleaved as a signal peptide. Cystine bridges form between Cys-33-Cys-62, Cys-40-Cys-55, and Cys-45-Cys-63.

Belongs to the beta-defensin family.

The protein resides in the secreted. In terms of biological role, has antibacterial activity. This Mus musculus (Mouse) protein is Beta-defensin 14 (Defb14).